We begin with the raw amino-acid sequence, 367 residues long: Ribosomal RNA large subunit methyltransferase M (367 aa).

S-adenosyl-L-methionine-binding positions include S188, 221–224 (CPGG), D240, D260, and D277. Residue K306 is the Proton acceptor of the active site.

Belongs to the class I-like SAM-binding methyltransferase superfamily. RNA methyltransferase RlmE family. RlmM subfamily. Monomer.

Its subcellular location is the cytoplasm. It carries out the reaction cytidine(2498) in 23S rRNA + S-adenosyl-L-methionine = 2'-O-methylcytidine(2498) in 23S rRNA + S-adenosyl-L-homocysteine + H(+). Its function is as follows. Catalyzes the 2'-O-methylation at nucleotide C2498 in 23S rRNA. The sequence is that of Ribosomal RNA large subunit methyltransferase M from Serratia proteamaculans (strain 568).